Here is an 813-residue protein sequence, read N- to C-terminus: Putative ATPase, plasma membrane-like (813 aa).

Residues 1-66 are Cytoplasmic-facing; sequence MATGDSLEDI…KKKEHITLRF (66 aa). Residues 67–86 form a helical membrane-spanning segment; the sequence is FALMFKPLSWVIQAAAIMAM. At 87 to 94 the chain is on the extracellular side; the sequence is LFANGDGR. The helical transmembrane segment at 95–115 threads the bilayer; the sequence is QLFLGIVCLLIVNTIICYLKE. Topologically, residues 116 to 245 are cytoplasmic; that stretch reads DDAANVVAMA…GHFRKVVTEI (130 aa). The chain crosses the membrane as a helical span at residues 246-266; it reads ENLCVISIAIGISIEVIVMYW. Over 267 to 275 the chain is Extracellular; sequence IQRRNFSDV. The chain crosses the membrane as a helical span at residues 276–293; that stretch reads INNLLVLVIGGIPLAMPT. The Cytoplasmic segment spans residues 294-555; that stretch reads VLYVIMVTGS…ASRAILQQMK (262 aa). Asp-331 functions as the 4-aspartylphosphate intermediate in the catalytic mechanism. Residues Asp-500 and Asp-504 each coordinate Mg(2+). Residues 556–577 traverse the membrane as a helical segment; sequence HYTIYAVSITIRVVFGFMFIAL. Residues 578 to 582 lie on the Extracellular side of the membrane; that stretch reads IWKFD. The chain crosses the membrane as a helical span at residues 583-605; that stretch reads FSPFMVLAIALLNEETTKAITMD. At 606 to 622 the chain is on the cytoplasmic side; it reads NVTNPSPTPDSLKLKEI. The helical transmembrane segment at 623–643 threads the bilayer; sequence FATGVVYGSYMALITVVFFWA. The Extracellular segment spans residues 644 to 664; sequence AYRTDIFPRTFHVRDLRGNEA. A helical transmembrane segment spans residues 665 to 685; the sequence is EMMCALYLQVSIMSQALFFVI. Residues 686-697 lie on the Cytoplasmic side of the membrane; sequence QSRSWFFVERPG. A helical transmembrane segment spans residues 698–718; that stretch reads ELLFLSFVTVQTIATTLAVYA. The Extracellular portion of the chain corresponds to 719–726; it reads SWETARIE. A helical membrane pass occupies residues 727–747; that stretch reads GIGWSWAGVIWLYNIIFFFPL. Over 748–813 the chain is Cytoplasmic; the sequence is DIMKFGIRYI…SQDLRGVGWV (66 aa). Ser-776 is modified (phosphoserine).

This sequence belongs to the cation transport ATPase (P-type) (TC 3.A.3) family. Type IIIA subfamily.

The protein resides in the membrane. This chain is Putative ATPase, plasma membrane-like, found in Arabidopsis thaliana (Mouse-ear cress).